A 366-amino-acid polypeptide reads, in one-letter code: MSENSHIKVIVGMSGGVDSSVSAYLLKQQGYQVEGLFMKNWEEDDNDEYCAAADDLKDAQAVCDKLGIELHTVNFAAEYWDNVFEYFLAEYKAGRTPNPDIMCNKEIKFKAFLEFAAQALGADFIATGHYVRRELRDDKYVMCRGLDDNKDQSYFLYTLSHEHIGQTLFPVGDIAKPEVRRIAEEQDLITHDKKDSTGICFIGERKFKDFLQKFLPAQPGVIEDTDGNNVGEHEGLMYHTLGQRKGLLIGGMKEGSGEPWYVVDKDLERNVLIVGQGKDHPRLYSNGLNANQLHWVDRIGPKGTTRCTVKTRYRQEDLSCTLLVGEDGMARVLFDEPQKAVTPGQSAVFYAEDVCLGGGIIDSVIK.

ATP-binding positions include 12–19 (GMSGGVDS) and M38. An interaction with target base in tRNA region spans residues 98–100 (NPD). The active-site Nucleophile is the C103. An intrachain disulfide couples C103 to C200. Residue G128 participates in ATP binding. The segment at 150–152 (KDQ) is interaction with tRNA. Residue C200 is the Cysteine persulfide intermediate of the active site. The tract at residues 312–313 (RY) is interaction with tRNA.

Belongs to the MnmA/TRMU family.

The protein resides in the cytoplasm. The catalysed reaction is S-sulfanyl-L-cysteinyl-[protein] + uridine(34) in tRNA + AH2 + ATP = 2-thiouridine(34) in tRNA + L-cysteinyl-[protein] + A + AMP + diphosphate + H(+). Catalyzes the 2-thiolation of uridine at the wobble position (U34) of tRNA, leading to the formation of s(2)U34. This chain is tRNA-specific 2-thiouridylase MnmA, found in Pseudoalteromonas translucida (strain TAC 125).